The chain runs to 316 residues: Methionyl-tRNA formyltransferase (316 aa).

109–112 provides a ligand contact to (6S)-5,6,7,8-tetrahydrofolate; sequence SLLP.

The protein belongs to the Fmt family.

The enzyme catalyses L-methionyl-tRNA(fMet) + (6R)-10-formyltetrahydrofolate = N-formyl-L-methionyl-tRNA(fMet) + (6S)-5,6,7,8-tetrahydrofolate + H(+). Its function is as follows. Attaches a formyl group to the free amino group of methionyl-tRNA(fMet). The formyl group appears to play a dual role in the initiator identity of N-formylmethionyl-tRNA by promoting its recognition by IF2 and preventing the misappropriation of this tRNA by the elongation apparatus. The chain is Methionyl-tRNA formyltransferase from Nitrosomonas eutropha (strain DSM 101675 / C91 / Nm57).